The chain runs to 205 residues: MSDPVRVGIIDHGSGNLHSARRALRQVGAEVIVSNDPSALLDTDALVLPGVGALAVCMTGLRAMGGARLVRQWVDEGRPLLGICVGHQMLFERGRERDVDVKCLGVLPGVVEELPAERLPHMGWNTVTPATDSALFQGVQERFYFVHSYGVVVTGPHDHFTTATHQGATFVAAAEYGPVTSTQFHPEKSGIAGLALLTRWLNQLS.

The region spanning 6–205 is the Glutamine amidotransferase type-1 domain; sequence RVGIIDHGSG…LLTRWLNQLS (200 aa). The Nucleophile role is filled by Cys84. Catalysis depends on residues His185 and Glu187.

As to quaternary structure, heterodimer of HisH and HisF.

It localises to the cytoplasm. The catalysed reaction is 5-[(5-phospho-1-deoxy-D-ribulos-1-ylimino)methylamino]-1-(5-phospho-beta-D-ribosyl)imidazole-4-carboxamide + L-glutamine = D-erythro-1-(imidazol-4-yl)glycerol 3-phosphate + 5-amino-1-(5-phospho-beta-D-ribosyl)imidazole-4-carboxamide + L-glutamate + H(+). The enzyme catalyses L-glutamine + H2O = L-glutamate + NH4(+). It functions in the pathway amino-acid biosynthesis; L-histidine biosynthesis; L-histidine from 5-phospho-alpha-D-ribose 1-diphosphate: step 5/9. IGPS catalyzes the conversion of PRFAR and glutamine to IGP, AICAR and glutamate. The HisH subunit catalyzes the hydrolysis of glutamine to glutamate and ammonia as part of the synthesis of IGP and AICAR. The resulting ammonia molecule is channeled to the active site of HisF. The protein is Imidazole glycerol phosphate synthase subunit HisH of Cutibacterium acnes (strain DSM 16379 / KPA171202) (Propionibacterium acnes).